The chain runs to 168 residues: Transcription elongation factor GreB (168 aa).

It belongs to the GreA/GreB family. GreB subfamily.

Functionally, necessary for efficient RNA polymerase transcription elongation past template-encoded arresting sites. The arresting sites in DNA have the property of trapping a certain fraction of elongating RNA polymerases that pass through, resulting in locked ternary complexes. Cleavage of the nascent transcript by cleavage factors such as GreA or GreB allows the resumption of elongation from the new 3'terminus. GreB releases sequences of up to 9 nucleotides in length. The polypeptide is Transcription elongation factor GreB (Xanthomonas axonopodis pv. citri (strain 306)).